Consider the following 43-residue polypeptide: Protein PsbN (43 aa).

The chain crosses the membrane as a helical span at residues 4–24 (GILVVIFISCLLVSFTGYTIY).

Belongs to the PsbN family.

It localises to the plastid. It is found in the chloroplast thylakoid membrane. In terms of biological role, may play a role in photosystem I and II biogenesis. The protein is Protein PsbN of Chaetosphaeridium globosum (Charophycean green alga).